Consider the following 514-residue polypeptide: Cilia- and flagella-associated protein 53 (514 aa).

Coiled coils occupy residues 91–176 and 205–478; these read VINT…EKKV and WEED…AGLA. Disordered stretches follow at residues 261-296 and 495-514; these read QNKA…QDKI and QALS…KPPL.

Belongs to the CFAP53 family. As to quaternary structure, microtubule inner protein component of sperm flagellar doublet microtubules. Interacts with PIERCE1 and PIERCE2; the interactions link outer dynein arms docking complex (ODA-DC) to the internal microtubule inner proteins (MIP) in cilium axoneme. Interacts with CCDC38. Interacts with CCDC42 and IFT88. Interacts with centriolar satellite proteins PIBF1/CEP90 and PCM1. Interacts with dyneins DNAIC1, DNAIC2 AND DNAH11 and with ODA-DC component ODAD4/TTC25. In terms of tissue distribution, expressed predominantly in testis (at protein level). In embryos at 8 dpc, specifically expressed in the node, in particular within the pit cells that are located at the center of the node and have rotating monocilia on their apical surface. In the adult, expressed in epithelial cells of the trachea, brain ventricles, oviduct and testis.

It localises to the cytoplasm. The protein localises to the cytoskeleton. The protein resides in the cilium axoneme. It is found in the flagellum axoneme. Its subcellular location is the microtubule organizing center. It localises to the centrosome. The protein localises to the centriolar satellite. The protein resides in the spindle pole. Microtubule inner protein (MIP) part of the dynein-decorated doublet microtubules (DMTs) in cilia axoneme, which is required for motile cilia beating. Regulates motility patterns of both 9+0 and 9+2 motile cilia through differential localization and recruitment of axonemal dynein components. Required for centriolar satellite integrity and non-motile cilium assembly. Required for motile cilium formation. Through its role in the beating of primary cilia, involved in the establishment of organ laterality during embryogenesis. Required for sperm flagellum biogenesis and is essential for male fertility. The chain is Cilia- and flagella-associated protein 53 from Mus musculus (Mouse).